An 892-amino-acid chain; its full sequence is Ataxin-7 (892 aa).

A compositionally biased stretch (basic and acidic residues) spans 1-15 (MSERAADDVRGEPRR). 2 disordered regions span residues 1 to 74 (MSER…SAAA) and 195 to 247 (SKGG…SRVP). Residues 16 to 38 (AAAAAGGAAAAAARQQQQQQQQQ) show a composition bias toward low complexity. A compositionally biased stretch (pro residues) spans 39 to 55 (QPPPPQPQRQQHPPPPP). The span at 195–222 (SKGGSASGSNRSSSGGVLSASSSSSKLL) shows a compositional bias: low complexity. A Glycyl lysine isopeptide (Lys-Gly) (interchain with G-Cter in SUMO); alternate cross-link involves residue Lys257. A Glycyl lysine isopeptide (Lys-Gly) (interchain with G-Cter in SUMO2); alternate cross-link involves residue Lys257. 4 disordered regions span residues 298–328 (PTLPSPGQILNGKGLPAPPTLEKKPEDNSNN), 389–505 (HKNK…ESVE), 616–730 (KSVP…SSHS), and 818–892 (SHGS…KARP). 2 stretches are compositionally biased toward basic and acidic residues: residues 318–327 (LEKKPEDNSN) and 389–403 (HKNKTREKELIRHPD). The region spanning 334–401 (KRLSEREFDP…KTREKELIRH (68 aa)) is the SCA7 domain. Pro residues-rich tracts occupy residues 405–419 (QQPPQPLRDPHPAPP), 448–458 (HTPSLPRPPGC), and 468–483 (IDPPPVHESPHPPLPA). The span at 493-502 (EEGEGDDKEE) shows a compositional bias: acidic residues. The span at 616-629 (KSVPAHGTTLNAQP) shows a compositional bias: polar residues. Positions 640 to 669 (SMQSRQVSSSSSSPSTPSGLSSVPSSPMSR) are enriched in low complexity. Residues 670–680 (KPQKLKSSKSL) are compositionally biased toward basic residues. Residues 685–695 (SSGNSTNCQNA) are compositionally biased toward polar residues. Low complexity-rich tracts occupy residues 716 to 730 (HSSSSSSSSSSSSHS) and 840 to 851 (SPSSSSINNSSS).

Belongs to the ataxin-7 family. As to quaternary structure, component of the SAGA transcription coactivator-HAT complex, at least composed of SUPT3H, GCN5L2, TAF5L, TAF6L, SUPT7L, TADA3L, TAD1L, TAF10, TAF12, TRRAP, TAF9 and ATXN7. The STAGA core complex is associated with a subcomplex required for histone deubiquitination composed of ATXN7L3, ENY2 and USP22. Interacts with SORBS1, PSMC1 and CRX. Interacts with TRRAP, GCN5L2 and TAF10. Interacts with alpha tubulin. Proteolytically cleaved by caspase-7 (CASP7). The cleavage may be involved in SCA7 degeneration: the isoform fragments may exert distinct toxic influences that could contribute to selective neurodegeneration. In terms of processing, sumoylation decreases the aggregation propensity and cellular toxicity of forms with an expanded poly-Gln region but has no effect on subcellular location or interaction with components of the STAGA complex. In terms of tissue distribution, isoform a is expressed in CNS, but is expressed predominantly in the peripherical tissues. Isoform b is expressed in CNS. Also highly expressed in the frontal lobe, skeletal muscle and spinal cord and is expressed at a lower level in the lung, lymphoblast and intestine.

The protein resides in the nucleus. The protein localises to the nucleolus. Its subcellular location is the nucleus matrix. It is found in the cytoplasm. It localises to the cytoskeleton. Functionally, acts as a component of the SAGA (aka STAGA) transcription coactivator-HAT complex. Mediates the interaction of SAGA complex with the CRX and is involved in CRX-dependent gene activation. Probably involved in tethering the deubiquitination module within the SAGA complex. Necessary for microtubule cytoskeleton stabilization. Involved in neurodegeneration. The protein is Ataxin-7 (ATXN7) of Homo sapiens (Human).